The sequence spans 154 residues: Ribonuclease H (154 aa).

An RNase H type-1 domain is found at 1 to 142 (MTPKLVIYTD…ADELARLGML (142 aa)). Mg(2+) is bound by residues Asp10, Glu48, Asp70, and Asp134.

It belongs to the RNase H family. In terms of assembly, monomer. Requires Mg(2+) as cofactor.

The protein localises to the cytoplasm. It carries out the reaction Endonucleolytic cleavage to 5'-phosphomonoester.. In terms of biological role, endonuclease that specifically degrades the RNA of RNA-DNA hybrids. The chain is Ribonuclease H from Caulobacter sp. (strain K31).